Reading from the N-terminus, the 617-residue chain is MAPGTAELEIDETLHLLRMVMQREFIHYLETLPGTKELFIDKCLLRPLDMIATSSDMKRHGVKRIMHFDLQKSPQVWNIEIDQRVFFLRPNVENARKIVEYVEESSENRSICVIWCNRQLEECDLAFESSGVIGHITQLSLNMCLLPLESDLFSLQHVESAQPDLFSVANMFVALQNLYGVIPTVYGLGSESKNLWNLVHALCSSNELRARPDQPISHLFLFDRQLDPVPVLLTGASYEGLLHEFFTIDCGKLAFPVDLRKQVQTGPLDFDWIEINPEEDKEAHQQNRGDTVKLDNCEDIFASIRNKHVTAALEFLHSKAKSIQKSIEKSSMIDDVADYRNFVEKDLRALKKDHKHCELHINACEMMMNKVKMEDYRTMFKLEHEMLLGTVTHEEYFDFVFERVPMRSCRDVVLSMMSLASLKLDGVPDDTYNEFVEMYLQKYGYEHMFELQNLRNSRVIYARRHIAHDRTISERARTWETLARKFRIVKGNEPMDMSNPSDMSYVFGARISPLLCKIVEDTIDHGWNQAEYERIIGKDKVLVEENTYIAADRRPDNRTRKAIMVFVNGGITYWEVAALRLLAIQKNFRILICTTHVIKKREYLEVRAKDASSVFGS.

The protein belongs to the STXBP/unc-18/SEC1 family. Probable core component of the class C core vacuole/endosome tethering (CORVET) complex. The common core is composed of the class C Vps proteins vps-11, vps-16 and vps-18, and which further associates with vps-8 and vps-33.2. Interacts with spe-39. In terms of tissue distribution, broadly expressed in somatic tissues including the pharynx, intestine, spermatheca, and in coelomocytes. Expressed in the lining of the gut lumen.

It localises to the early endosome. The protein localises to the late endosome membrane. It is found in the lysosome membrane. The protein resides in the cytoplasmic vesicle. Its subcellular location is the clathrin-coated vesicle. It localises to the recycling endosome. Its function is as follows. Plays a role in vesicle-mediated protein trafficking to lysosomal compartments and in membrane docking/fusion reactions of late endosomes/lysosomes. Believed to act as a component of the putative CORVET endosomal tethering complex which is proposed to be involved in the rab-5-to-rab-7 endosome conversion probably implicating sand-1, and via binding SNAREs and SNARE complexes to mediate tethering and docking events during SNARE-mediated membrane fusion. The CORVET complex is proposed to function as a rab-5 effector to mediate early endosome fusion probably in specific endosome subpopulations. Most likely within the CORVET complex, it is involved in the fusion of endocytic compartments. Required for sperm development and function. This chain is Vacuolar protein sorting-associated protein 33B, found in Caenorhabditis elegans.